The primary structure comprises 388 residues: F-box/LRR-repeat protein At3g59190 (388 aa).

The 54-residue stretch at 11–64 (KDIISNLPDALLCHVLSFLPTTEAASTSVLAKRWRFLLAFVPNLDLDNMIYDRP) folds into the F-box domain. LRR repeat units lie at residues 151–177 (KVSGTDEFTIDVGEFFLPKLKTLHLSA), 180–205 (FGDEGGPPFAKLISACHALEELVMIK), 228–252 (CENIDENPKSVSFDTPNLVYLEFTD), 313–345 (TMYLSSEALEVLTFCCKKAIPVFNNLIHLTVET), and 346–371 (DERVDWESLPILLKNCPNLETLIFEV).

The polypeptide is F-box/LRR-repeat protein At3g59190 (Arabidopsis thaliana (Mouse-ear cress)).